Here is a 533-residue protein sequence, read N- to C-terminus: GMP synthase [glutamine-hydrolyzing] (533 aa).

The Glutamine amidotransferase type-1 domain maps to 22-215; that stretch reads RILILDFGSQ…THNVAGCSGT (194 aa). Cys-99 acts as the Nucleophile in catalysis. Residues His-189 and Glu-191 contribute to the active site. A GMPS ATP-PPase domain is found at 216-408; that stretch reads WTMAGFRELE…LGIPESIVGR (193 aa). Residue 243 to 249 coordinates ATP; it reads SGGVDSS.

As to quaternary structure, homodimer.

It catalyses the reaction XMP + L-glutamine + ATP + H2O = GMP + L-glutamate + AMP + diphosphate + 2 H(+). It functions in the pathway purine metabolism; GMP biosynthesis; GMP from XMP (L-Gln route): step 1/1. Functionally, catalyzes the synthesis of GMP from XMP. In Gluconobacter oxydans (strain 621H) (Gluconobacter suboxydans), this protein is GMP synthase [glutamine-hydrolyzing].